Reading from the N-terminus, the 199-residue chain is Small ribosomal subunit protein uS4B (199 aa).

The S4 RNA-binding domain occupies cysteine 88–phenylalanine 151.

It belongs to the universal ribosomal protein uS4 family. In terms of assembly, part of the 30S ribosomal subunit. Contacts protein S5. The interaction surface between S4 and S5 is involved in control of translational fidelity.

One of the primary rRNA binding proteins, it binds directly to 16S rRNA where it nucleates assembly of the body of the 30S subunit. Its function is as follows. With S5 and S12 plays an important role in translational accuracy. This Alkaliphilus metalliredigens (strain QYMF) protein is Small ribosomal subunit protein uS4B.